The following is a 51-amino-acid chain: Otoconin-90 (51 aa).

This sequence belongs to the phospholipase A2 family. In terms of assembly, interacts with OTOL1.

The protein resides in the secreted. Its function is as follows. Major protein of the otoconia, a calcium carbonate structure in the saccule and utricle of the ear. Together with OTOL1, acts as a scaffold for otoconia biomineralization: sequesters calcium and forms interconnecting fibrils between otoconia that are incorporated into the calcium crystal structure. Together with OTOL1, modulates calcite crystal morphology and growth kinetics. It is unlikely that this protein has phospholipase A2 activity. The sequence is that of Otoconin-90 (OC90) from Cavia porcellus (Guinea pig).